The following is a 339-amino-acid chain: Anthranilate phosphoribosyltransferase (339 aa).

5-phospho-alpha-D-ribose 1-diphosphate is bound by residues Gly-81, 84 to 85 (GD), Ser-89, 91 to 94 (NVST), 109 to 117 (KHGNRALSS), and Ala-121. Gly-81 provides a ligand contact to anthranilate. Position 93 (Ser-93) interacts with Mg(2+). Asn-112 lines the anthranilate pocket. Arg-167 is a binding site for anthranilate. Mg(2+) contacts are provided by Asp-226 and Glu-227.

This sequence belongs to the anthranilate phosphoribosyltransferase family. Homodimer. Mg(2+) serves as cofactor.

The enzyme catalyses N-(5-phospho-beta-D-ribosyl)anthranilate + diphosphate = 5-phospho-alpha-D-ribose 1-diphosphate + anthranilate. It participates in amino-acid biosynthesis; L-tryptophan biosynthesis; L-tryptophan from chorismate: step 2/5. In terms of biological role, catalyzes the transfer of the phosphoribosyl group of 5-phosphorylribose-1-pyrophosphate (PRPP) to anthranilate to yield N-(5'-phosphoribosyl)-anthranilate (PRA). The protein is Anthranilate phosphoribosyltransferase of Rhodopseudomonas palustris (strain BisB18).